A 386-amino-acid chain; its full sequence is Putative 8-amino-7-oxononanoate synthase (386 aa).

Arg-22 is a substrate binding site. 109 to 110 (GY) is a pyridoxal 5'-phosphate binding site. His-134 is a substrate binding site. Pyridoxal 5'-phosphate contacts are provided by residues Ser-182, 207-210 (DEAH), and 238-241 (TLSK). An N6-(pyridoxal phosphate)lysine modification is found at Lys-241. Thr-356 contributes to the substrate binding site.

Belongs to the class-II pyridoxal-phosphate-dependent aminotransferase family. BioF subfamily. Homodimer. The cofactor is pyridoxal 5'-phosphate.

The enzyme catalyses 6-carboxyhexanoyl-[ACP] + L-alanine + H(+) = (8S)-8-amino-7-oxononanoate + holo-[ACP] + CO2. Its pathway is cofactor biosynthesis; biotin biosynthesis. Catalyzes the decarboxylative condensation of pimeloyl-[acyl-carrier protein] and L-alanine to produce 8-amino-7-oxononanoate (AON), [acyl-carrier protein], and carbon dioxide. This Trichormus variabilis (strain ATCC 29413 / PCC 7937) (Anabaena variabilis) protein is Putative 8-amino-7-oxononanoate synthase (bioF).